A 320-amino-acid chain; its full sequence is MNKFITLFVLLASVSVAMSATCLTCVKEGAVCDATANICEEGTVCIKPNSTAANTICFVLPTLNEDCSGPLACADSYYCNTTSKICVEAYYLGVGESCSSENQCSTSLVCTGGKCVNEVYPLCGASNSRVGCKAGEGCAFNGTALVCSPFIANGAACNTSTSGLCHPVSSCSNGVCTAPLTGALNSNCTSNTDCNIANGLYCSSGKCTAVPEALNNCTTTPTVDNCLGYSACMCPSNDDTAKTGSCKDTIEYSDVTSDAYNKYDSCVVSCPAVTIVQKQSCLSKCTNPLAGAANNVCSSATTIAFNAFVVFAIVLSVLLF.

Residues 1–19 (MNKFITLFVLLASVSVAMS) form the signal peptide. 9 cysteine pairs are disulfide-bonded: Cys39/Cys57, Cys67/Cys79, Cys73/Cys86, Cys98/Cys110, Cys104/Cys115, Cys123/Cys138, Cys132/Cys147, Cys157/Cys171, and Cys165/Cys176. A glycan (N-linked (GlcNAc...) asparagine) is linked at Asn49. N-linked (GlcNAc...) asparagine glycosylation is present at Asn80. N-linked (GlcNAc...) asparagine glycans are attached at residues Asn141 and Asn158. N-linked (GlcNAc...) asparagine glycosylation occurs at Asn187. 2 cysteine pairs are disulfide-bonded: Cys188/Cys202 and Cys194/Cys207. Asn216 is a glycosylation site (N-linked (GlcNAc...) asparagine). Intrachain disulfides connect Cys226–Cys246, Cys232–Cys234, Cys266–Cys285, and Cys270–Cys281. Ser298 is lipidated: GPI-like-anchor amidated serine. A propeptide spans 299 to 320 (SATTIAFNAFVVFAIVLSVLLF) (removed in mature form).

Contains 18 disulfide bonds. In terms of processing, the GPI-like-anchor contains a phosphoceramide group, rather than a phosphatidyl group.

The protein resides in the cell membrane. In terms of biological role, cell-cell adhesion during development. This chain is Cell-cell adhesion glycoprotein 64, found in Heterostelium pallidum (Cellular slime mold).